The primary structure comprises 191 residues: Signal peptidase IB (191 aa).

The Cytoplasmic segment spans residues 1–7 (MKKEILE). The chain crosses the membrane as a helical span at residues 8–28 (WIISIAVAFVILFIVGKFIVT). Residues 29–191 (PYTIKGESMD…HNFNPENTKN (163 aa)) lie on the Extracellular side of the membrane. Active-site residues include Ser36 and Lys77.

Belongs to the peptidase S26 family.

It localises to the cell membrane. The catalysed reaction is Cleavage of hydrophobic, N-terminal signal or leader sequences from secreted and periplasmic proteins.. Its function is as follows. Essential for cell viability. This is Signal peptidase IB (spsB) from Staphylococcus aureus (strain COL).